Consider the following 149-residue polypeptide: Protein FAM72A (149 aa).

The protein belongs to the FAM72 family. In terms of assembly, interacts with UNG. Expressed at high levels in stomach and also in kidney and, at low levels, in heart (at protein level). In the stomach, highly expressed in foveolar cells, parietal cells and chief cells (at protein level). In kidney, expressed in endothelial cells, mesangial and epithelial cells (parietal and visceral epithelium) around glomerulus (at protein level).

It is found in the cytoplasm. It localises to the mitochondrion. May play a role in the regulation of cellular reactive oxygen species metabolism. May participate in cell growth regulation. The chain is Protein FAM72A (Fam72a) from Rattus norvegicus (Rat).